The sequence spans 446 residues: Putative diacyglycerol O-acyltransferase MT3481 (446 aa).

The active-site Proton acceptor is His-129. The tract at residues Ser-425–His-446 is disordered.

The protein belongs to the long-chain O-acyltransferase family.

It carries out the reaction an acyl-CoA + a 1,2-diacyl-sn-glycerol = a triacyl-sn-glycerol + CoA. It functions in the pathway glycerolipid metabolism; triacylglycerol biosynthesis. The sequence is that of Putative diacyglycerol O-acyltransferase MT3481 from Mycobacterium tuberculosis (strain CDC 1551 / Oshkosh).